A 190-amino-acid polypeptide reads, in one-letter code: Cancer-related nucleoside-triphosphatase (190 aa).

A2 bears the N-acetylalanine mark. ATP-binding positions include G9–T16 and V109–G116. Position 165 is an N6-acetyllysine (K165).

The protein belongs to the THEP1 NTPase family. As to quaternary structure, monomer.

It catalyses the reaction a ribonucleoside 5'-triphosphate + H2O = a ribonucleoside 5'-diphosphate + phosphate + H(+). The enzyme catalyses 5-methyl-UTP + H2O = 5-methyl-UDP + phosphate + H(+). It carries out the reaction CTP + H2O = CDP + phosphate + H(+). The catalysed reaction is ATP + H2O = ADP + phosphate + H(+). It catalyses the reaction GTP + H2O = GDP + phosphate + H(+). Its function is as follows. Has nucleotide phosphatase activity towards ATP, GTP, CTP, TTP and UTP. Hydrolyzes nucleoside diphosphates with lower efficiency. The protein is Cancer-related nucleoside-triphosphatase of Homo sapiens (Human).